Consider the following 292-residue polypeptide: Ribosomal protein L11 methyltransferase (292 aa).

Positions 144, 165, 187, and 229 each coordinate S-adenosyl-L-methionine.

This sequence belongs to the methyltransferase superfamily. PrmA family.

It localises to the cytoplasm. It carries out the reaction L-lysyl-[protein] + 3 S-adenosyl-L-methionine = N(6),N(6),N(6)-trimethyl-L-lysyl-[protein] + 3 S-adenosyl-L-homocysteine + 3 H(+). In terms of biological role, methylates ribosomal protein L11. This Pseudomonas fluorescens (strain SBW25) protein is Ribosomal protein L11 methyltransferase.